Here is a 340-residue protein sequence, read N- to C-terminus: Glyceraldehyde-3-phosphate dehydrogenase 2 (340 aa).

NADP(+) contacts are provided by residues Arg12–Ile13, Arg78, and Thr120. D-glyceraldehyde 3-phosphate-binding positions include Ser151–Thr153 and Thr182. The active-site Nucleophile is the Cys152. Asn183 is a binding site for NADP(+). D-glyceraldehyde 3-phosphate contacts are provided by residues Arg197, Thr210–Gly211, and Arg233. Asn315 provides a ligand contact to NADP(+).

The protein belongs to the glyceraldehyde-3-phosphate dehydrogenase family. As to quaternary structure, homotetramer. Interacts with BrxC. In response to oxidative stress, the active site Cys likely reacts with bacillithiol (BSH) to form mixed disulfides to protect the Cys residue against overoxidation. S-bacillithiolation presumably leads to loss of catalytic activity. Debacillithiolation by monothiol bacilliredoxin BrxC restores the activity.

It is found in the cytoplasm. It catalyses the reaction D-glyceraldehyde 3-phosphate + phosphate + NADP(+) = (2R)-3-phospho-glyceroyl phosphate + NADPH + H(+). The catalysed reaction is D-glyceraldehyde 3-phosphate + phosphate + NAD(+) = (2R)-3-phospho-glyceroyl phosphate + NADH + H(+). It functions in the pathway carbohydrate biosynthesis; gluconeogenesis. Involved in the gluconeogenesis. Catalyzes the oxidative phosphorylation of glyceraldehyde 3-phosphate (G3P) to 1,3-bisphosphoglycerate (BPG) using the cofactor NADP. The first reaction step involves the formation of a hemiacetal intermediate between G3P and a cysteine residue, and this hemiacetal intermediate is then oxidized to a thioester, with concomitant reduction of NADP to NADPH. The reduced NADPH is then exchanged with the second NADP, and the thioester is attacked by a nucleophilic inorganic phosphate to produce BPG. This is Glyceraldehyde-3-phosphate dehydrogenase 2 from Bacillus subtilis (strain 168).